A 251-amino-acid chain; its full sequence is Ribosomal RNA small subunit methyltransferase G (251 aa).

Residues G74, F79, 125-126, and R144 each bind S-adenosyl-L-methionine; that span reads AE. The disordered stretch occupies residues 224 to 251; sequence RPAGLPTQHPLGAIEGAPRVESEEPEEP.

This sequence belongs to the methyltransferase superfamily. RNA methyltransferase RsmG family.

Its subcellular location is the cytoplasm. In terms of biological role, specifically methylates the N7 position of a guanine in 16S rRNA. The protein is Ribosomal RNA small subunit methyltransferase G of Gloeobacter violaceus (strain ATCC 29082 / PCC 7421).